The sequence spans 614 residues: ATP-dependent RNA helicase dbp-3 (614 aa).

The disordered stretch occupies residues 1 to 138 (MSSTKKHSRS…GTTTPAASTN (138 aa)). Residues 9 to 36 (RSEGEEKDARLAKKVKTDETPVDGEVKK) are compositionally biased toward basic and acidic residues. 2 stretches are compositionally biased toward basic residues: residues 37–58 (ERKK…KSKK) and 91–109 (KKEK…KKAK). Residues 117–138 (EESTSASKATTNGTTTPAASTN) are compositionally biased toward low complexity. The Q motif signature appears at 180-207 (MNFSQLPQSNLISKNPFAAYTNPTPIQS). Positions 210-394 (WPFSLSGRDV…ESYMINPAQV (185 aa)) constitute a Helicase ATP-binding domain. 223–230 (AETGSGKT) provides a ligand contact to ATP. The DEAD box motif lies at 340–343 (DEAD). The Helicase C-terminal domain maps to 435–584 (RLYELLKEAQ…PVPEELLKFG (150 aa)).

This sequence belongs to the DEAD box helicase family. DDX5/DBP2 subfamily.

It localises to the nucleus. Its subcellular location is the nucleolus. It catalyses the reaction ATP + H2O = ADP + phosphate + H(+). Its function is as follows. ATP-dependent RNA helicase required for 60S ribosomal subunit synthesis. Involved in efficient pre-rRNA processing, predominantly at site A3, which is necessary for the normal formation of 25S and 5.8S rRNAs. This Neurospora crassa (strain ATCC 24698 / 74-OR23-1A / CBS 708.71 / DSM 1257 / FGSC 987) protein is ATP-dependent RNA helicase dbp-3 (dbp-3).